The sequence spans 595 residues: Elongation factor 4 (595 aa).

The 183-residue stretch at 2-184 (SHIRNFSIIA…RLVATIPPPT (183 aa)) folds into the tr-type G domain. Residues 14-19 (DHGKST) and 131-134 (NKMD) each bind GTP.

Belongs to the TRAFAC class translation factor GTPase superfamily. Classic translation factor GTPase family. LepA subfamily.

The protein localises to the cell inner membrane. The enzyme catalyses GTP + H2O = GDP + phosphate + H(+). Required for accurate and efficient protein synthesis under certain stress conditions. May act as a fidelity factor of the translation reaction, by catalyzing a one-codon backward translocation of tRNAs on improperly translocated ribosomes. Back-translocation proceeds from a post-translocation (POST) complex to a pre-translocation (PRE) complex, thus giving elongation factor G a second chance to translocate the tRNAs correctly. Binds to ribosomes in a GTP-dependent manner. The polypeptide is Elongation factor 4 (Pseudomonas syringae pv. tomato (strain ATCC BAA-871 / DC3000)).